The sequence spans 557 residues: CTP synthase (557 aa).

An amidoligase domain region spans residues 1 to 267 (MAKYIFVTGG…GAYLTQRLGL (267 aa)). CTP is bound at residue serine 13. A UTP-binding site is contributed by serine 13. Position 14–19 (14–19 (SVGKGI)) interacts with ATP. Residue tyrosine 54 coordinates L-glutamine. Residue aspartate 71 participates in ATP binding. Residues aspartate 71 and glutamate 141 each coordinate Mg(2+). CTP contacts are provided by residues 148–150 (DIE), 188–193 (KTKPTQ), and lysine 224. UTP is bound by residues 188 to 193 (KTKPTQ) and lysine 224. A Glutamine amidotransferase type-1 domain is found at 292 to 535 (AIALVGKYVE…VAAAAKTFRE (244 aa)). Glycine 354 contributes to the L-glutamine binding site. Cysteine 381 acts as the Nucleophile; for glutamine hydrolysis in catalysis. L-glutamine-binding positions include 382–385 (LGMQ), glutamate 406, and arginine 463. Catalysis depends on residues histidine 508 and glutamate 510. The interval 536–557 (GDQRPLPLEQNGAVTEHEPHSR) is disordered.

It belongs to the CTP synthase family. In terms of assembly, homotetramer.

The catalysed reaction is UTP + L-glutamine + ATP + H2O = CTP + L-glutamate + ADP + phosphate + 2 H(+). The enzyme catalyses L-glutamine + H2O = L-glutamate + NH4(+). It carries out the reaction UTP + NH4(+) + ATP = CTP + ADP + phosphate + 2 H(+). It functions in the pathway pyrimidine metabolism; CTP biosynthesis via de novo pathway; CTP from UDP: step 2/2. Allosterically activated by GTP, when glutamine is the substrate; GTP has no effect on the reaction when ammonia is the substrate. The allosteric effector GTP functions by stabilizing the protein conformation that binds the tetrahedral intermediate(s) formed during glutamine hydrolysis. Inhibited by the product CTP, via allosteric rather than competitive inhibition. Catalyzes the ATP-dependent amination of UTP to CTP with either L-glutamine or ammonia as the source of nitrogen. Regulates intracellular CTP levels through interactions with the four ribonucleotide triphosphates. The protein is CTP synthase of Roseiflexus sp. (strain RS-1).